Consider the following 104-residue polypeptide: Small ribosomal subunit protein bS18c (104 aa).

A disordered region spans residues 84–104 (DKQFERSESTPRTIGLRTRNK).

The protein belongs to the bacterial ribosomal protein bS18 family. In terms of assembly, part of the 30S ribosomal subunit.

It localises to the plastid. The protein resides in the chloroplast. The chain is Small ribosomal subunit protein bS18c from Cucumis sativus (Cucumber).